The primary structure comprises 229 residues: (S)-2-haloacid dehalogenase 2 (229 aa).

Asp10 functions as the Nucleophile in the catalytic mechanism. An (S)-2-haloacid is bound by residues 11-12, Arg41, and 118-119; these read LY and SN. Positions 175-180 are important for catalytic activity; it reads SSNAWD.

This sequence belongs to the HAD-like hydrolase superfamily. S-2-haloalkanoic acid dehalogenase family.

It catalyses the reaction an (S)-2-haloacid + H2O = a (2R)-2-hydroxycarboxylate + a halide anion + H(+). It carries out the reaction (S)-2-chloropropanoate + H2O = (R)-lactate + chloride + H(+). Its function is as follows. Catalyzes the hydrolytic dehalogenation of small (S)-2-haloalkanoic acids to yield the corresponding (R)-2-hydroxyalkanoic acids. Acts on acids of short chain lengths, C(2) to C(4), with inversion of configuration at C-2. Active with 2-halogenated carboxylic acids and converts only the S-isomer (or L-isomer) of 2-chloropropionic acid with inversion of configuration to produce R-lactate (or D-isomer). The chain is (S)-2-haloacid dehalogenase 2 from Pseudomonas sp. (strain CBS-3).